The sequence spans 426 residues: MASLLGTSSSAAAAILASTPLSSRSCKPAVFSLFPSSGQSQGRKFYGGIRVPVKKGRSQFHVAISNVATEINLLKNRVRNLLEESQRPVYPFAAIVGQDEMKLCLLLNVIDPKIGGVMIMGDRGTGKSTTVRSLVDLLPEIKVISGDPFNSDPDDQEVMSAEVRDKLRSGQQLPISRTKINMVDLPLGATEDRVCGTIDIEKALTEGVKAFEPGLLAKANRGILYVDEVNLLDDHLVDVLLDSAASGWNTVEREGISISHPARFILIGSGNPEEGELRPQLLDRFGMHAQVGTVRDAELRVKIVEERARFDKNPKEFRESYKAEQEKLQNQIDSARNALSAVTIDHDLRVKISKVCAELNVDGLRGDIVTNRAARALAALKGRDKVTPEDIATVIPNCLRHRLRKDPLESIDSGVLVVEKFYEVFA.

The transit peptide at 1-50 (MASLLGTSSSAAAAILASTPLSSRSCKPAVFSLFPSSGQSQGRKFYGGIR) directs the protein to the chloroplast. 2 cysteine pairs are disulfide-bonded: Cys-104–Cys-195 and Cys-356–Cys-398. 121–128 (GDRGTGKS) is an ATP binding site.

This sequence belongs to the Mg-chelatase subunits D/I family. The magnesium chelatase complex is a heterotrimer consisting of subunits CHLI, CHLD and CHLH. In terms of tissue distribution, strongly expressed in young leaves and to a lesser extent in mature leaves.

The protein localises to the plastid. It is found in the chloroplast. It catalyses the reaction protoporphyrin IX + Mg(2+) + ATP + H2O = Mg-protoporphyrin IX + ADP + phosphate + 3 H(+). It participates in porphyrin-containing compound metabolism; chlorophyll biosynthesis. Redox regulation; active in reducing conditions, inactive in oxidizing conditions. Thioredoxins f and m mediate the reversible reductive activation of oxidized CHLI. Its function is as follows. Involved in chlorophyll biosynthesis. Catalyzes the insertion of magnesium ion into protoporphyrin IX to yield Mg-protoporphyrin IX. The magnesium-chelatase is a complex of three subunits, CHLI, CHLD and CHLH. The reaction takes place in two steps, with an ATP-dependent activation followed by an ATP-dependent chelation step. This chain is Magnesium-chelatase subunit ChlI, chloroplastic (CHLI), found in Nicotiana tabacum (Common tobacco).